We begin with the raw amino-acid sequence, 360 residues long: Photosystem II protein D1 (360 aa).

3 helical membrane passes run 29–46 (YVGW…TATT), 118–133 (QFLI…QWEL), and 142–156 (WICV…ARTA). Tyr-126 lines the pheophytin a pocket. [CaMn4O5] cluster contacts are provided by Asp-170 and Glu-189. The helical transmembrane segment at 197–218 (FHMLGVAGVFGGSLFSAMHGSL) threads the bilayer. Position 198 (His-198) interacts with chlorophyll a. Residues His-215 and 264 to 265 (SF) each bind a quinone. His-215 contacts Fe cation. A Fe cation-binding site is contributed by His-272. Residues 274–288 (FLGAWPVIGIWFTAM) traverse the membrane as a helical segment. Residues His-332, Glu-333, Asp-342, and Ala-344 each coordinate [CaMn4O5] cluster. A propeptide spanning residues 345–360 (SGEQAPVALTAPAING) is cleaved from the precursor.

This sequence belongs to the reaction center PufL/M/PsbA/D family. In terms of assembly, PSII is composed of 1 copy each of membrane proteins PsbA, PsbB, PsbC, PsbD, PsbE, PsbF, PsbH, PsbI, PsbJ, PsbK, PsbL, PsbM, PsbT, PsbX, PsbY, PsbZ, Psb30/Ycf12, peripheral proteins PsbO, CyanoQ (PsbQ), PsbU, PsbV and a large number of cofactors. It forms dimeric complexes. It depends on The D1/D2 heterodimer binds P680, chlorophylls that are the primary electron donor of PSII, and subsequent electron acceptors. It shares a non-heme iron and each subunit binds pheophytin, quinone, additional chlorophylls, carotenoids and lipids. D1 provides most of the ligands for the Mn4-Ca-O5 cluster of the oxygen-evolving complex (OEC). There is also a Cl(-1) ion associated with D1 and D2, which is required for oxygen evolution. The PSII complex binds additional chlorophylls, carotenoids and specific lipids. as a cofactor. In terms of processing, tyr-161 forms a radical intermediate that is referred to as redox-active TyrZ, YZ or Y-Z. Post-translationally, C-terminally processed by CtpA; processing is essential to allow assembly of the oxygen-evolving complex and thus photosynthetic growth.

It is found in the cellular thylakoid membrane. It carries out the reaction 2 a plastoquinone + 4 hnu + 2 H2O = 2 a plastoquinol + O2. Photosystem II (PSII) is a light-driven water:plastoquinone oxidoreductase that uses light energy to abstract electrons from H(2)O, generating O(2) and a proton gradient subsequently used for ATP formation. It consists of a core antenna complex that captures photons, and an electron transfer chain that converts photonic excitation into a charge separation. The D1/D2 (PsbA/PsbD) reaction center heterodimer binds P680, the primary electron donor of PSII as well as several subsequent electron acceptors. This chain is Photosystem II protein D1, found in Synechocystis sp. (strain PCC 6714) (Aphanocapsa sp. (strain PCC 6714)).